We begin with the raw amino-acid sequence, 338 residues long: tRNA pseudouridine synthase D (338 aa).

Residue Asp-79 is the Nucleophile of the active site. Residues 154–303 (GVPNYFGEQR…EEAWRANILY (150 aa)) enclose the TRUD domain.

This sequence belongs to the pseudouridine synthase TruD family.

It carries out the reaction uridine(13) in tRNA = pseudouridine(13) in tRNA. Functionally, responsible for synthesis of pseudouridine from uracil-13 in transfer RNAs. The polypeptide is tRNA pseudouridine synthase D (Legionella pneumophila (strain Corby)).